A 403-amino-acid polypeptide reads, in one-letter code: Arginine deiminase (403 aa).

Cys388 (amidino-cysteine intermediate) is an active-site residue.

The protein belongs to the arginine deiminase family.

The protein resides in the cytoplasm. The catalysed reaction is L-arginine + H2O = L-citrulline + NH4(+). It functions in the pathway amino-acid degradation; L-arginine degradation via ADI pathway; carbamoyl phosphate from L-arginine: step 1/2. The sequence is that of Arginine deiminase from Mycoplasma capricolum subsp. capricolum (strain California kid / ATCC 27343 / NCTC 10154).